Reading from the N-terminus, the 135-residue chain is Mini-ribonuclease 3 (135 aa).

Residue aspartate 17 is part of the active site.

It belongs to the MrnC RNase family. As to quaternary structure, homodimer. Mg(2+) is required as a cofactor.

The protein localises to the cytoplasm. In terms of biological role, involved in correct processing of both the 5' and 3' ends of 23S rRNA precursor. Processes 30S rRNA precursor transcript even in absence of ribonuclease 3 (Rnc); Rnc processes 30S rRNA into smaller rRNA precursors. The sequence is that of Mini-ribonuclease 3 from Bacillus cereus (strain ATCC 14579 / DSM 31 / CCUG 7414 / JCM 2152 / NBRC 15305 / NCIMB 9373 / NCTC 2599 / NRRL B-3711).